The primary structure comprises 190 residues: NADH dehydrogenase [ubiquinone] iron-sulfur protein 3 (190 aa).

The protein belongs to the complex I 30 kDa subunit family. In terms of assembly, complex I is composed of at least 49 different subunits. This is a component of the iron-sulfur (IP) fragment of the enzyme.

It localises to the mitochondrion inner membrane. The catalysed reaction is a ubiquinone + NADH + 5 H(+)(in) = a ubiquinol + NAD(+) + 4 H(+)(out). In terms of biological role, core subunit of the mitochondrial membrane respiratory chain NADH dehydrogenase (Complex I) that is believed to belong to the minimal assembly required for catalysis. Complex I functions in the transfer of electrons from NADH to the respiratory chain. The immediate electron acceptor for the enzyme is believed to be ubiquinone. The protein is NADH dehydrogenase [ubiquinone] iron-sulfur protein 3 (NAD9) of Arabidopsis thaliana (Mouse-ear cress).